The following is a 413-amino-acid chain: Na(+)-translocating NADH-quinone reductase subunit B (413 aa).

3 helical membrane passes run 56 to 76 (MMILVWFAVFPAMFWGMYNVG), 123 to 143 (LLGAAYFLPIYAVVFLVGGFW), and 169 to 189 (IVPPTLPLWQAALGISFGVVI). Position 236 is an FMN phosphoryl threonine (threonine 236). 5 consecutive transmembrane segments (helical) span residues 270–290 (GSIGEVSTLMILIGGAIIIFG), 297–317 (IVAGVMIGMIATAYLFNWIGS), 322–342 (LFAMPWYWHLVLGGFAFGMIF), 358–378 (WWYGGLIGVMCILIRVANPAY), and 381–401 (GMMLAILFANLFAPLFDYVVV).

Belongs to the NqrB/RnfD family. As to quaternary structure, composed of six subunits; NqrA, NqrB, NqrC, NqrD, NqrE and NqrF. FMN is required as a cofactor.

The protein localises to the cell inner membrane. The enzyme catalyses a ubiquinone + n Na(+)(in) + NADH + H(+) = a ubiquinol + n Na(+)(out) + NAD(+). Functionally, NQR complex catalyzes the reduction of ubiquinone-1 to ubiquinol by two successive reactions, coupled with the transport of Na(+) ions from the cytoplasm to the periplasm. NqrA to NqrE are probably involved in the second step, the conversion of ubisemiquinone to ubiquinol. This is Na(+)-translocating NADH-quinone reductase subunit B from Yersinia pestis.